The sequence spans 1239 residues: Protein strawberry notch homolog 1 (1239 aa).

Residues 684–837 (AQSNNNSPRD…SANSNTNSSF (154 aa)) form a disordered region. The span at 694–713 (SPCKENKIKKRKGEEVSREA) shows a compositional bias: basic and acidic residues. Residues 728 to 744 (DESESESDASDNEESDN) show a composition bias toward acidic residues. Basic residues predominate over residues 778 to 790 (KEHKKVKEKKKKK). Residues 814–837 (FTSTVGTTTSSTNASANSNTNSSF) are compositionally biased toward low complexity. The stretch at 838–866 (VTSQDAVERAQQMKKELLDKLEKLAEDLP) forms a coiled coil.

Belongs to the SBNO family.

It localises to the nucleus. In terms of biological role, plays a crucial role in the regulation of neural stem cells (NSCs) proliferation. Enhances the phosphorylation of GSK3B through the PI3K-Akt signaling pathway, thereby upregulating the Wnt/beta-catenin signaling pathway and promoting the proliferation of NSCs. The chain is Protein strawberry notch homolog 1 (SBNO1) from Gallus gallus (Chicken).